We begin with the raw amino-acid sequence, 287 residues long: uncharacterized protein (287 aa).

Transmembrane regions (helical) follow at residues 7 to 28 (LLLT…RAAL), 32 to 54 (AIDA…AVLL), 67 to 86 (GWRG…YAYV), 91 to 113 (GTGA…LLRG), 120 to 139 (ALLG…LPGA), 144 to 163 (LGGA…YTLL), 170 to 192 (PLAV…LLAF), 202 to 224 (GLAY…WYSA), 231 to 253 (IQGA…LLLG), and 263 to 280 (ATLA…PRLG). EamA domains follow at residues 15 to 136 (LAFA…FLLL) and 155 to 276 (LAWG…LILA).

The protein resides in the cell membrane. This is an uncharacterized protein from Pseudomonas aeruginosa (strain ATCC 15692 / DSM 22644 / CIP 104116 / JCM 14847 / LMG 12228 / 1C / PRS 101 / PAO1).